The primary structure comprises 211 residues: Large ribosomal subunit protein eL13 (211 aa).

The residue at position 16 (lysine 16) is an N6-acetyllysine. 3 positions are modified to phosphoserine: serine 52, serine 77, and serine 106. Glycyl lysine isopeptide (Lys-Gly) (interchain with G-Cter in SUMO2) cross-links involve residues lysine 123 and lysine 145. Lysine 174 is covalently cross-linked (Glycyl lysine isopeptide (Lys-Gly) (interchain with G-Cter in SUMO1); alternate). Residues lysine 174 and lysine 177 each participate in a glycyl lysine isopeptide (Lys-Gly) (interchain with G-Cter in SUMO2); alternate cross-link. Lysine 177 is modified (N6-acetyllysine; alternate).

It belongs to the eukaryotic ribosomal protein eL13 family. In terms of assembly, component of the large ribosomal subunit.

The protein localises to the cytoplasm. Component of the large ribosomal subunit. The ribosome is a large ribonucleoprotein complex responsible for the synthesis of proteins in the cell. The chain is Large ribosomal subunit protein eL13 (Rpl13) from Mus musculus (Mouse).